The chain runs to 256 residues: RNA polymerase sigma factor SigI1 (256 aa).

A Polymerase core binding motif is present at residues 67–80 (DEFSIALSAFNEAI). Residues 205–224 (RNELKKKAKVHGRTIGNNRK) constitute a DNA-binding region (H-T-H motif).

It belongs to the sigma-70 factor family. SigI subfamily. In terms of assembly, interacts with RsgI1.

It is found in the cytoplasm. Its activity is regulated as follows. Negatively regulated by the anti-sigma-I factor RsgI1. Binding of the polysaccharide substrate to RsgI1 may lead to the release and activation of SigI1. Its function is as follows. Sigma factors are initiation factors that promote the attachment of RNA polymerase to specific initiation sites and are then released. This sigma factor is involved in regulation of cellulosomal genes via an external polysaccharide-sensing mechanism. SigI1 promotes transcription from sigI1 and celS promoters. This chain is RNA polymerase sigma factor SigI1, found in Acetivibrio thermocellus (strain ATCC 27405 / DSM 1237 / JCM 9322 / NBRC 103400 / NCIMB 10682 / NRRL B-4536 / VPI 7372) (Clostridium thermocellum).